A 213-amino-acid chain; its full sequence is Isomeliandiol synthase MOI2 (213 aa).

A run of 5 helical transmembrane segments spans residues 18–38 (AALH…SWFI), 52–72 (VLCW…YYVF), 109–129 (IESM…YALA), 137–157 (ILQF…FLSA), and 171–191 (YWAY…LIAI). The EXPERA domain maps to 48–190 (MDRVVLCWWA…IWVIVPALIA (143 aa)).

Belongs to the EBP family. In terms of tissue distribution, mainly expressed in petioles.

It localises to the membrane. The catalysed reaction is 7,8-epoxymelianol = isomeliandiol. The protein operates within secondary metabolite biosynthesis; terpenoid biosynthesis. In terms of biological role, isomerase involved in the biosynthesis of limonoids triterpene natural products such as azadirachtin, an antifeedant widely used as bioinsecticide, and possessing many medicinal applications including anti-tumoral, anti-malarial, anti-rheumatic, antibacterial, anti-inflammatory, anti-pyretic and diuretic effects. Catalyzes the conversion of 7,8-epoxymelianol to isomeliandiol via skeletal rearrangements. This Melia azedarach (Chinaberry tree) protein is Isomeliandiol synthase MOI2.